Consider the following 390-residue polypeptide: 1-deoxy-D-xylulose 5-phosphate reductoisomerase (390 aa).

Residues T10, G11, S12, I13, G36, R37, N38, and N121 each contribute to the NADPH site. K122 serves as a coordination point for 1-deoxy-D-xylulose 5-phosphate. E123 is an NADPH binding site. A Mn(2+)-binding site is contributed by D147. 1-deoxy-D-xylulose 5-phosphate contacts are provided by S148, E149, S173, and H196. A Mn(2+)-binding site is contributed by E149. Residue G202 coordinates NADPH. 1-deoxy-D-xylulose 5-phosphate is bound by residues S209, N214, K215, and E218. Residue E218 participates in Mn(2+) binding. Positions 367-390 (AASEHGRREAEKRVGARAHAPASR) are disordered. Residues 370–380 (EHGRREAEKRV) are compositionally biased toward basic and acidic residues.

Belongs to the DXR family. The cofactor is Mg(2+). It depends on Mn(2+) as a cofactor.

The catalysed reaction is 2-C-methyl-D-erythritol 4-phosphate + NADP(+) = 1-deoxy-D-xylulose 5-phosphate + NADPH + H(+). It participates in isoprenoid biosynthesis; isopentenyl diphosphate biosynthesis via DXP pathway; isopentenyl diphosphate from 1-deoxy-D-xylulose 5-phosphate: step 1/6. Its function is as follows. Catalyzes the NADPH-dependent rearrangement and reduction of 1-deoxy-D-xylulose-5-phosphate (DXP) to 2-C-methyl-D-erythritol 4-phosphate (MEP). The polypeptide is 1-deoxy-D-xylulose 5-phosphate reductoisomerase (Anaeromyxobacter dehalogenans (strain 2CP-1 / ATCC BAA-258)).